A 417-amino-acid chain; its full sequence is Serine hydroxymethyltransferase (417 aa).

(6S)-5,6,7,8-tetrahydrofolate contacts are provided by residues leucine 121 and 125–127; that span reads GHL. Lysine 229 carries the N6-(pyridoxal phosphate)lysine modification. Residue 355-357 coordinates (6S)-5,6,7,8-tetrahydrofolate; sequence SPF.

This sequence belongs to the SHMT family. In terms of assembly, homodimer. Requires pyridoxal 5'-phosphate as cofactor.

It localises to the cytoplasm. The catalysed reaction is (6R)-5,10-methylene-5,6,7,8-tetrahydrofolate + glycine + H2O = (6S)-5,6,7,8-tetrahydrofolate + L-serine. Its pathway is one-carbon metabolism; tetrahydrofolate interconversion. It functions in the pathway amino-acid biosynthesis; glycine biosynthesis; glycine from L-serine: step 1/1. In terms of biological role, catalyzes the reversible interconversion of serine and glycine with tetrahydrofolate (THF) serving as the one-carbon carrier. This reaction serves as the major source of one-carbon groups required for the biosynthesis of purines, thymidylate, methionine, and other important biomolecules. Also exhibits THF-independent aldolase activity toward beta-hydroxyamino acids, producing glycine and aldehydes, via a retro-aldol mechanism. The polypeptide is Serine hydroxymethyltransferase (Shewanella sp. (strain W3-18-1)).